Consider the following 309-residue polypeptide: Diadenylate cyclase (309 aa).

One can recognise a DAC domain in the interval 144 to 301; that stretch reads TITLYELFET…DGKIVFETDP (158 aa).

The protein belongs to the adenylate cyclase family. DacZ subfamily. Requires Mn(2+) as cofactor.

The catalysed reaction is 2 ATP = 3',3'-c-di-AMP + 2 diphosphate. In terms of biological role, diadenylate cyclase that catalyzes the condensation of 2 ATP molecules into cyclic di-AMP (c-di-AMP). c-di-AMP is a second messenger for intracellular signal transduction involved in the control of important regulatory processes such as osmoregulation. This is Diadenylate cyclase from Methanocaldococcus jannaschii (strain ATCC 43067 / DSM 2661 / JAL-1 / JCM 10045 / NBRC 100440) (Methanococcus jannaschii).